The chain runs to 401 residues: Ninja-family protein MODD (401 aa).

2 disordered regions span residues 95-135 (KQGV…GEGR) and 215-238 (TGNK…GLPP). Residues 105-130 (RPSGGAEAEPAAARLPASGSPSSGSS) show a composition bias toward low complexity. Polar residues predominate over residues 217–226 (NKKTGGNVNH).

The protein belongs to the Ninja family. Interacts with BZIP46, TPR3 and PUB70.

Its subcellular location is the nucleus. Functionally, acts as a negative regulator of abscisic acid (ABA) signaling and drought tolerance. Mediates deactivation and degradation of BZIP46, a positive regulator of ABA signaling and drought stress tolerance. Represses BZIP46 activity via interaction with the TPR3-HDAC1 corepressor complex and down-regulation of the histone acetylation level at BZIP46 target genes. Promotes BZIP46 degradation via interaction with the U-box type ubiquitin E3 ligase PUB70. In Oryza sativa subsp. japonica (Rice), this protein is Ninja-family protein MODD.